Consider the following 407-residue polypeptide: Venom metalloproteinase 3 (407 aa).

N-linked (GlcNAc...) asparagine glycans are attached at residues N42, N91, N126, and N166. The Peptidase M12B domain maps to 191 to 405; the sequence is FYPKLLVLVD…TSAACLKDTY (215 aa). 2 cysteine pairs are disulfide-bonded: C317–C400 and C356–C384. H340 contacts Zn(2+). Residue E341 is part of the active site. Residues H344 and H350 each contribute to the Zn(2+) site. Residue N391 is glycosylated (N-linked (GlcNAc...) asparagine).

It in the C-terminal section; belongs to the venom metalloproteinase (M12B) family. As to quaternary structure, monomer. Zn(2+) serves as cofactor. In terms of tissue distribution, expressed by the venom gland.

The protein resides in the secreted. Its activity is regulated as follows. The gelatinase activity is inhibited by EDTA. In terms of biological role, the recombinant protein has gelatinase activity. In vivo, injection of this recombinant into fifth instar L.oleracea (host) larvae results in partial insect mortality associated with the molt to sixth instar, with surviving insects showing retarded development and growth. The polypeptide is Venom metalloproteinase 3 (Eulophus pennicornis (Parasitoid wasp)).